We begin with the raw amino-acid sequence, 264 residues long: Thymidylate synthase (264 aa).

DUMP contacts are provided by residues Arg21 and 126–127 (RR). Residue Cys146 is the Nucleophile of the active site. DUMP is bound by residues 166-169 (RSAD), Asn177, and 207-209 (HLY). Residue Asp169 coordinates (6R)-5,10-methylene-5,6,7,8-tetrahydrofolate. Ala263 provides a ligand contact to (6R)-5,10-methylene-5,6,7,8-tetrahydrofolate.

The protein belongs to the thymidylate synthase family. Bacterial-type ThyA subfamily. Homodimer.

It is found in the cytoplasm. The catalysed reaction is dUMP + (6R)-5,10-methylene-5,6,7,8-tetrahydrofolate = 7,8-dihydrofolate + dTMP. It functions in the pathway pyrimidine metabolism; dTTP biosynthesis. Its function is as follows. Catalyzes the reductive methylation of 2'-deoxyuridine-5'-monophosphate (dUMP) to 2'-deoxythymidine-5'-monophosphate (dTMP) while utilizing 5,10-methylenetetrahydrofolate (mTHF) as the methyl donor and reductant in the reaction, yielding dihydrofolate (DHF) as a by-product. This enzymatic reaction provides an intracellular de novo source of dTMP, an essential precursor for DNA biosynthesis. This chain is Thymidylate synthase, found in Nitrobacter hamburgensis (strain DSM 10229 / NCIMB 13809 / X14).